The chain runs to 66 residues: VRDAYIAQNYNCVYTCFKDAHCNDLCTKNGASSGYCQWAGKYGNACWCYALPDNVPIRIPGKCHRK.

Residues 2–64 (RDAYIAQNYN…VPIRIPGKCH (63 aa)) enclose the LCN-type CS-alpha/beta domain. 4 cysteine pairs are disulfide-bonded: cysteine 12/cysteine 63, cysteine 16/cysteine 36, cysteine 22/cysteine 46, and cysteine 26/cysteine 48.

The protein belongs to the long (4 C-C) scorpion toxin superfamily. Sodium channel inhibitor family. Alpha subfamily. As to expression, expressed by the venom gland.

It localises to the secreted. In terms of biological role, alpha toxins bind voltage-independently at site-3 of sodium channels (Nav) and inhibit the inactivation of the activated channels, thereby blocking neuronal transmission. This chain is Toxin Boma6c, found in Buthus occitanus mardochei (Moroccan scorpion).